Here is a 325-residue protein sequence, read N- to C-terminus: 5-dehydro-2-deoxygluconokinase (325 aa).

The protein belongs to the carbohydrate kinase PfkB family.

The catalysed reaction is 5-dehydro-2-deoxy-D-gluconate + ATP = 6-phospho-5-dehydro-2-deoxy-D-gluconate + ADP + H(+). It participates in polyol metabolism; myo-inositol degradation into acetyl-CoA; acetyl-CoA from myo-inositol: step 5/7. Catalyzes the phosphorylation of 5-dehydro-2-deoxy-D-gluconate (2-deoxy-5-keto-D-gluconate or DKG) to 6-phospho-5-dehydro-2-deoxy-D-gluconate (DKGP). The polypeptide is 5-dehydro-2-deoxygluconokinase (Listeria innocua serovar 6a (strain ATCC BAA-680 / CLIP 11262)).